The following is a 289-amino-acid chain: Eukaryotic translation initiation factor 3 subunit F (289 aa).

The 131-residue stretch at 7-137 folds into the MPN domain; sequence VKVHPVVLFQ…LRAYVCVPLG (131 aa).

It belongs to the eIF-3 subunit F family. As to quaternary structure, component of the eukaryotic translation initiation factor 3 (eIF-3) complex.

The protein resides in the cytoplasm. Functionally, component of the eukaryotic translation initiation factor 3 (eIF-3) complex, which is involved in protein synthesis of a specialized repertoire of mRNAs and, together with other initiation factors, stimulates binding of mRNA and methionyl-tRNAi to the 40S ribosome. The eIF-3 complex specifically targets and initiates translation of a subset of mRNAs involved in cell proliferation. The protein is Eukaryotic translation initiation factor 3 subunit F of Bombyx mori (Silk moth).